A 314-amino-acid chain; its full sequence is 2,3-dihydroxyphenylpropionate/2,3-dihydroxicinnamic acid 1,2-dioxygenase 1 (314 aa).

His115 functions as the Proton donor in the catalytic mechanism. The Proton acceptor role is filled by His179.

The protein belongs to the LigB/MhpB extradiol dioxygenase family. Homotetramer. Fe(2+) serves as cofactor.

It catalyses the reaction 3-(2,3-dihydroxyphenyl)propanoate + O2 = (2Z,4E)-2-hydroxy-6-oxonona-2,4-dienedioate + H(+). The catalysed reaction is (2E)-3-(2,3-dihydroxyphenyl)prop-2-enoate + O2 = (2Z,4E,7E)-2-hydroxy-6-oxonona-2,4,7-trienedioate + H(+). Its pathway is aromatic compound metabolism; 3-phenylpropanoate degradation. Its function is as follows. Catalyzes the non-heme iron(II)-dependent oxidative cleavage of 2,3-dihydroxyphenylpropionic acid and 2,3-dihydroxicinnamic acid into 2-hydroxy-6-ketononadienedioate and 2-hydroxy-6-ketononatrienedioate, respectively. This Pseudomonas putida (Arthrobacter siderocapsulatus) protein is 2,3-dihydroxyphenylpropionate/2,3-dihydroxicinnamic acid 1,2-dioxygenase 1.